A 240-amino-acid chain; its full sequence is UDP-2,3-diacylglucosamine hydrolase (240 aa).

Mn(2+) contacts are provided by Asp-8, His-10, Asp-41, Asn-79, and His-114. Residue 79 to 80 (NR) participates in substrate binding. Asp-122, Ser-160, Asn-164, Lys-167, and His-195 together coordinate substrate. Mn(2+) contacts are provided by His-195 and His-197.

This sequence belongs to the LpxH family. Mn(2+) serves as cofactor.

The protein resides in the cell inner membrane. It catalyses the reaction UDP-2-N,3-O-bis[(3R)-3-hydroxytetradecanoyl]-alpha-D-glucosamine + H2O = 2-N,3-O-bis[(3R)-3-hydroxytetradecanoyl]-alpha-D-glucosaminyl 1-phosphate + UMP + 2 H(+). Its pathway is glycolipid biosynthesis; lipid IV(A) biosynthesis; lipid IV(A) from (3R)-3-hydroxytetradecanoyl-[acyl-carrier-protein] and UDP-N-acetyl-alpha-D-glucosamine: step 4/6. Its function is as follows. Hydrolyzes the pyrophosphate bond of UDP-2,3-diacylglucosamine to yield 2,3-diacylglucosamine 1-phosphate (lipid X) and UMP by catalyzing the attack of water at the alpha-P atom. Involved in the biosynthesis of lipid A, a phosphorylated glycolipid that anchors the lipopolysaccharide to the outer membrane of the cell. The protein is UDP-2,3-diacylglucosamine hydrolase of Photorhabdus laumondii subsp. laumondii (strain DSM 15139 / CIP 105565 / TT01) (Photorhabdus luminescens subsp. laumondii).